Reading from the N-terminus, the 130-residue chain is uncharacterized protein (130 aa).

The Cytoplasmic segment spans residues 1-58 (MREQLKLFTREIVDFTFLILSGFDYYQTLLISSNSSKKRPKDSSLLSEKKKKKKKKKK). Residues 34–57 (NSSKKRPKDSSLLSEKKKKKKKKK) form a disordered region. Residues 59–79 (DVLSYLSYLKDLPFVPFLFWQ) traverse the membrane as a helical segment. The Extracellular segment spans residues 80 to 94 (PGYSQREKNPRQHSL). The chain crosses the membrane as a helical span at residues 95 to 115 (FIMTITKPGMISMADMNYVVS). The Cytoplasmic segment spans residues 116 to 130 (KNRSLNRPAERGGNR).

The protein resides in the membrane. This is an uncharacterized protein from Saccharomyces cerevisiae (strain ATCC 204508 / S288c) (Baker's yeast).